Consider the following 428-residue polypeptide: Probable mitochondrial adenine nucleotide transporter BTL3 (428 aa).

Solcar repeat units lie at residues 129-212 (LNTT…YRGQ), 222-307 (TTNF…LKSA), and 336-421 (LGPM…MKVV). 6 helical membrane-spanning segments follow: residues 132–152 (TKHL…IAPL), 187–207 (GNLV…YAYD), 228–248 (FVAG…LDTI), 283–303 (LVPS…VYDI), 342–362 (LLYG…FEVV), and 390–410 (VPAL…SAAI).

The protein belongs to the mitochondrial carrier (TC 2.A.29) family.

It is found in the mitochondrion inner membrane. Its function is as follows. Probable mitochondrial adenylate carrier that catalyzes the transport of ATP, ADP and AMP. This is Probable mitochondrial adenine nucleotide transporter BTL3 from Arabidopsis thaliana (Mouse-ear cress).